The chain runs to 140 residues: MAIQRTFSIIKPDATKRNLTGQIAAKFEEAGLRIVASKRIQLTLAQAQAFYGVHSERPFFGELCEFMISEPIVVQVLEGEDAIVKNREVMGATNPADAAPGTIRKEFALSIGENSVHGSDAPETAAEEIAFFFSGLELVG.

Residues lysine 11, phenylalanine 59, arginine 87, threonine 93, arginine 104, and asparagine 114 each coordinate ATP. The active-site Pros-phosphohistidine intermediate is the histidine 117.

It belongs to the NDK family. In terms of assembly, homotetramer. Requires Mg(2+) as cofactor.

The protein resides in the cytoplasm. It carries out the reaction a 2'-deoxyribonucleoside 5'-diphosphate + ATP = a 2'-deoxyribonucleoside 5'-triphosphate + ADP. The enzyme catalyses a ribonucleoside 5'-diphosphate + ATP = a ribonucleoside 5'-triphosphate + ADP. Functionally, major role in the synthesis of nucleoside triphosphates other than ATP. The ATP gamma phosphate is transferred to the NDP beta phosphate via a ping-pong mechanism, using a phosphorylated active-site intermediate. The protein is Nucleoside diphosphate kinase of Jannaschia sp. (strain CCS1).